We begin with the raw amino-acid sequence, 22 residues long: Peptide PGLa-BM3 (22 aa).

The residue at position 22 (leucine 22) is a Leucine amide.

As to expression, expressed by the skin glands.

It localises to the secreted. Antimicrobial peptide. This is Peptide PGLa-BM3 from Xenopus boumbaensis (Mawa clawed frog).